Consider the following 498-residue polypeptide: Glycerol kinase (498 aa).

An ADP-binding site is contributed by Thr-12. ATP contacts are provided by Thr-12, Thr-13, and Ser-14. A sn-glycerol 3-phosphate-binding site is contributed by Thr-12. An ADP-binding site is contributed by Arg-16. Residues Arg-82, Glu-83, Tyr-134, and Asp-244 each coordinate sn-glycerol 3-phosphate. Positions 82, 83, 134, 244, and 245 each coordinate glycerol. Residues Thr-266 and Gly-310 each coordinate ADP. Residues Thr-266, Gly-310, Gln-314, and Gly-411 each contribute to the ATP site. 2 residues coordinate ADP: Gly-411 and Asn-415.

It belongs to the FGGY kinase family.

The enzyme catalyses glycerol + ATP = sn-glycerol 3-phosphate + ADP + H(+). It participates in polyol metabolism; glycerol degradation via glycerol kinase pathway; sn-glycerol 3-phosphate from glycerol: step 1/1. With respect to regulation, inhibited by fructose 1,6-bisphosphate (FBP). Key enzyme in the regulation of glycerol uptake and metabolism. Catalyzes the phosphorylation of glycerol to yield sn-glycerol 3-phosphate. The sequence is that of Glycerol kinase from Roseiflexus sp. (strain RS-1).